We begin with the raw amino-acid sequence, 89 residues long: Small ribosomal subunit protein uS14A (89 aa).

The protein belongs to the universal ribosomal protein uS14 family. Part of the 30S ribosomal subunit. Contacts proteins S3 and S10.

Binds 16S rRNA, required for the assembly of 30S particles and may also be responsible for determining the conformation of the 16S rRNA at the A site. The chain is Small ribosomal subunit protein uS14A from Bacillus velezensis (strain DSM 23117 / BGSC 10A6 / LMG 26770 / FZB42) (Bacillus amyloliquefaciens subsp. plantarum).